We begin with the raw amino-acid sequence, 83 residues long: Large ribosomal subunit protein bL27c (83 aa).

The segment at 1–24 (MAHKKGAGSTKNGRDSNAKRLGVK) is disordered.

Belongs to the bacterial ribosomal protein bL27 family.

It is found in the plastid. It localises to the chloroplast. In Trieres chinensis (Marine centric diatom), this protein is Large ribosomal subunit protein bL27c (rpl27).